Reading from the N-terminus, the 115-residue chain is Large ribosomal subunit protein bL20c (115 aa).

The protein belongs to the bacterial ribosomal protein bL20 family.

The protein resides in the plastid. It is found in the chloroplast. Binds directly to 23S ribosomal RNA and is necessary for the in vitro assembly process of the 50S ribosomal subunit. It is not involved in the protein synthesizing functions of that subunit. This is Large ribosomal subunit protein bL20c from Nymphaea alba (White water-lily).